The sequence spans 355 residues: D-alanine--D-alanine ligase (355 aa).

One can recognise an ATP-grasp domain in the interval 143 to 350; the sequence is KTIFSNLKIP…IEQLVAKLVD (208 aa). 178–233 contacts ATP; that stretch reads IKKLNFPVFVKPSNSGSSLGISKVINKSALLKALEKAWEIDARILVEEGLETREIE. Asp303, Glu317, and Asn319 together coordinate Mg(2+).

It belongs to the D-alanine--D-alanine ligase family. Mg(2+) is required as a cofactor. Mn(2+) serves as cofactor.

It is found in the cytoplasm. It catalyses the reaction 2 D-alanine + ATP = D-alanyl-D-alanine + ADP + phosphate + H(+). It functions in the pathway cell wall biogenesis; peptidoglycan biosynthesis. Cell wall formation. The protein is D-alanine--D-alanine ligase of Prochlorococcus marinus (strain MIT 9312).